Reading from the N-terminus, the 327-residue chain is L-lactate dehydrogenase (327 aa).

Residues valine 18, aspartate 39, lysine 44, tyrosine 69, and 83–84 (GA) each bind NAD(+). Substrate-binding positions include glutamine 86, arginine 92, and 124 to 127 (NPVD). NAD(+) contacts are provided by residues 122–124 (AAN) and serine 147. Position 152 to 155 (152 to 155 (DSAR)) interacts with substrate. Residues arginine 157 and histidine 172 each contribute to the beta-D-fructose 1,6-bisphosphate site. The Proton acceptor role is filled by histidine 179. Residue tyrosine 224 is modified to Phosphotyrosine. Threonine 233 is a binding site for substrate.

The protein belongs to the LDH/MDH superfamily. LDH family. As to quaternary structure, homotetramer.

The protein resides in the cytoplasm. The enzyme catalyses (S)-lactate + NAD(+) = pyruvate + NADH + H(+). Its pathway is fermentation; pyruvate fermentation to lactate; (S)-lactate from pyruvate: step 1/1. With respect to regulation, allosterically activated by fructose 1,6-bisphosphate (FBP). Catalyzes the conversion of lactate to pyruvate. This chain is L-lactate dehydrogenase, found in Streptococcus equi subsp. equi (strain 4047).